We begin with the raw amino-acid sequence, 419 residues long: L-rhamnose isomerase (419 aa).

Positions 262, 294, and 296 each coordinate Mn(2+).

It belongs to the rhamnose isomerase family. As to quaternary structure, homotetramer. Requires Mn(2+) as cofactor.

The protein localises to the cytoplasm. It catalyses the reaction L-rhamnopyranose = L-rhamnulose. It functions in the pathway carbohydrate degradation; L-rhamnose degradation; glycerone phosphate from L-rhamnose: step 1/3. Functionally, catalyzes the interconversion of L-rhamnose and L-rhamnulose. The polypeptide is L-rhamnose isomerase (Salmonella typhimurium (strain LT2 / SGSC1412 / ATCC 700720)).